The following is a 322-amino-acid chain: MPITRMRMRPWLEMQINSNQIPGLIWINKEEMIFQIPWKHAAKHGWDINKDACLFRSWAIHTGRYKAGEKEPDPKTWKANFRCAMNSLPDIEEVKDQSRNKGSSAVRVYRMLPPLTKNQRKERKSKSSRDAKCKAKKKSCGESSPDTFSDGLSSSTLPDDHSSYTAQGYIGQDLDIEQALTPALSPCAISSTLPEWRIPVEIVPDSTSDLYNFQVSPMPSTSEAATDEDEEGKLTEDIMKLLEQSGWQQTNVDGKGYLLNEPGAQPTAVYGDFSCKEEPEVESPGGYTGLISSDLKNVDTSWLDNLLTPVRLPSIQAIPCAP.

The IRF tryptophan pentad repeat DNA-binding region spans 5–113 (RMRMRPWLEM…SAVRVYRMLP (109 aa)). An N6-acetyllysine modification is found at lysine 78. Residues 92–164 (EEVKDQSRNK…STLPDDHSSY (73 aa)) form a disordered region. Polar residues predominate over residues 141 to 157 (GESSPDTFSDGLSSSTL). Residues lysine 276 and lysine 296 each participate in a glycyl lysine isopeptide (Lys-Gly) (interchain with G-Cter in SUMO) cross-link.

This sequence belongs to the IRF family. In terms of assembly, monomer. Homodimer. Interacts with EP300. Interacts with MYD88. Interacts with PIAS3. Interacts with SPOP. In terms of processing, phosphorylated by CK2 and this positively regulates its activity. Post-translationally, sumoylation represses the transcriptional activity and displays enhanced resistance to protein degradation. Sumoylated by UBE2I/UBC9 and SUMO1. Inactivates the tumor suppressor activity. Elevated levels in tumor cells. Major site is Lys-276. Sumoylation is enhanced by PIAS3. Desumoylated by SENP1 in tumor cells and appears to compete with ubiquitination on C-terminal sites. Ubiquitinated in a SPOP-depedent manner. Appears to compete with sumoylation on C-terminal sites.

The protein localises to the nucleus. It is found in the cytoplasm. Its activity is regulated as follows. Activated by MYD88. Its function is as follows. Transcriptional regulator which displays a remarkable functional diversity in the regulation of cellular responses. Regulates transcription of IFN and IFN-inducible genes, host response to viral and bacterial infections, regulation of many genes expressed during hematopoiesis, inflammation, immune responses and cell proliferation and differentiation, regulation of the cell cycle and induction of growth arrest and programmed cell death following DNA damage. Stimulates both innate and acquired immune responses through the activation of specific target genes and can act as a transcriptional activator and repressor regulating target genes by binding to an interferon-stimulated response element (ISRE) in their promoters. Has an essentail role in IFNG-dependent immunity to mycobacteria. Binds to a consensus sequence in gene promoters. Its target genes for transcriptional activation activity include: genes involved in anti-viral response, such as IFN-alpha/beta, RIGI, TNFSF10/TRAIL, ZBP1, OAS1/2, PIAS1/GBP, EIF2AK2/PKR and RSAD2/viperin; antibacterial response, such as GBP2, GBP5 and NOS2/INOS; anti-proliferative response, such as p53/TP53, LOX and CDKN1A; apoptosis, such as BBC3/PUMA, CASP1, CASP7 and CASP8; immune response, such as IL7, IL12A/B and IL15, PTGS2/COX2 and CYBB; DNA damage responses and DNA repair, such as POLQ/POLH; MHC class I expression, such as TAP1, PSMB9/LMP2, PSME1/PA28A, PSME2/PA28B and B2M and MHC class II expression, such as CIITA; metabolic enzymes, such as ACOD1/IRG1. Represses genes involved in anti-proliferative response, such as BIRC5/survivin, CCNB1, CCNE1, CDK1, CDK2 and CDK4 and in immune response, such as FOXP3, IL4, ANXA2 and TLR4. Stimulates p53/TP53-dependent transcription through enhanced recruitment of EP300 leading to increased acetylation of p53/TP53. Plays an important role in immune response directly affecting NK maturation and activity, macrophage production of IL12, Th1 development and maturation of CD8+ T-cells. Also implicated in the differentiation and maturation of dendritic cells and in the suppression of regulatory T (Treg) cells development. Acts as a tumor suppressor and plays a role not only in antagonism of tumor cell growth but also in stimulating an immune response against tumor cells. The sequence is that of Interferon regulatory factor 1 (IRF1) from Sus scrofa (Pig).